Here is a 122-residue protein sequence, read N- to C-terminus: Large ribosomal subunit protein uL14 (122 aa).

This sequence belongs to the universal ribosomal protein uL14 family. Part of the 50S ribosomal subunit. Forms a cluster with proteins L3 and L19. In the 70S ribosome, L14 and L19 interact and together make contacts with the 16S rRNA in bridges B5 and B8.

Binds to 23S rRNA. Forms part of two intersubunit bridges in the 70S ribosome. This is Large ribosomal subunit protein uL14 from Albidiferax ferrireducens (strain ATCC BAA-621 / DSM 15236 / T118) (Rhodoferax ferrireducens).